We begin with the raw amino-acid sequence, 196 residues long: Corticoliberin (196 aa).

The first 24 residues, 1 to 24, serve as a signal peptide directing secretion; it reads MRLPLLVSAGVLLVALLPCPPCRA. Positions 25–153 are excised as a propeptide; the sequence is LLSRGPVPGA…HQEAPERERR (129 aa). Disordered regions lie at residues 32–61, 85–105, and 136–158; these read PGARQAPQHPQPLDFFQPPPQSEQPQQPQA, APLSPASSLLAGGSGSRPSPE, and GARNALGGHQEAPERERRSEEPP. Composition is skewed to low complexity over residues 38 to 47 and 85 to 104; these read PQHPQPLDFF and APLSPASSLLAGGSGSRPSP. Residues 146–156 are compositionally biased toward basic and acidic residues; sequence EAPERERRSEE. Ile-194 carries the post-translational modification Isoleucine amide.

It belongs to the sauvagine/corticotropin-releasing factor/urotensin I family. Interacts (via C-terminus) with CRFR1 (via N-terminal extracellular domain). As to expression, produced by the hypothalamus and placenta.

Its subcellular location is the secreted. Functionally, hormone regulating the release of corticotropin from pituitary gland. Induces NLRP6 in intestinal epithelial cells, hence may influence gut microbiota profile. This is Corticoliberin (CRH) from Homo sapiens (Human).